A 394-amino-acid polypeptide reads, in one-letter code: Acetate kinase (394 aa).

Mg(2+) is bound at residue Asn-7. Lys-14 is a binding site for ATP. Arg-90 contacts substrate. Asp-147 serves as the catalytic Proton donor/acceptor. Residues 204–208 (HLGNG), 278–280 (DLR), and 326–330 (GIGEN) each bind ATP. Mg(2+) is bound at residue Glu-380.

Belongs to the acetokinase family. Homodimer. Requires Mg(2+) as cofactor. Mn(2+) is required as a cofactor.

The protein localises to the cytoplasm. The enzyme catalyses acetate + ATP = acetyl phosphate + ADP. It participates in metabolic intermediate biosynthesis; acetyl-CoA biosynthesis; acetyl-CoA from acetate: step 1/2. Functionally, catalyzes the formation of acetyl phosphate from acetate and ATP. Can also catalyze the reverse reaction. In Flavobacterium johnsoniae (strain ATCC 17061 / DSM 2064 / JCM 8514 / BCRC 14874 / CCUG 350202 / NBRC 14942 / NCIMB 11054 / UW101) (Cytophaga johnsonae), this protein is Acetate kinase.